A 154-amino-acid polypeptide reads, in one-letter code: Myoglobin (154 aa).

Positions 2-148 (GLSDGEWQQV…FRNDIAAKYK (147 aa)) constitute a Globin domain. A Phosphoserine modification is found at Ser4. Nitrite is bound at residue His65. His65 lines the O2 pocket. His94 is a heme b binding site.

Belongs to the globin family. In terms of assembly, monomeric.

It localises to the cytoplasm. The protein localises to the sarcoplasm. It carries out the reaction Fe(III)-heme b-[protein] + nitric oxide + H2O = Fe(II)-heme b-[protein] + nitrite + 2 H(+). It catalyses the reaction H2O2 + AH2 = A + 2 H2O. Functionally, monomeric heme protein which primary function is to store oxygen and facilitate its diffusion within muscle tissues. Reversibly binds oxygen through a pentacoordinated heme iron and enables its timely and efficient release as needed during periods of heightened demand. Depending on the oxidative conditions of tissues and cells, and in addition to its ability to bind oxygen, it also has a nitrite reductase activity whereby it regulates the production of bioactive nitric oxide. Under stress conditions, like hypoxia and anoxia, it also protects cells against reactive oxygen species thanks to its pseudoperoxidase activity. The chain is Myoglobin (MB) from Equus quagga burchellii (Burchell's zebra).